The sequence spans 427 residues: Glutamate-1-semialdehyde 2,1-aminomutase (427 aa).

At Lys-265 the chain carries N6-(pyridoxal phosphate)lysine.

Belongs to the class-III pyridoxal-phosphate-dependent aminotransferase family. HemL subfamily. As to quaternary structure, homodimer. The cofactor is pyridoxal 5'-phosphate.

The protein resides in the cytoplasm. The enzyme catalyses (S)-4-amino-5-oxopentanoate = 5-aminolevulinate. Its pathway is porphyrin-containing compound metabolism; protoporphyrin-IX biosynthesis; 5-aminolevulinate from L-glutamyl-tRNA(Glu): step 2/2. The protein is Glutamate-1-semialdehyde 2,1-aminomutase of Pseudomonas syringae pv. syringae (strain B728a).